The sequence spans 364 residues: Histidinol-phosphate aminotransferase (364 aa).

An N6-(pyridoxal phosphate)lysine modification is found at Lys-226.

The protein belongs to the class-II pyridoxal-phosphate-dependent aminotransferase family. Histidinol-phosphate aminotransferase subfamily. As to quaternary structure, homodimer. Pyridoxal 5'-phosphate is required as a cofactor.

The catalysed reaction is L-histidinol phosphate + 2-oxoglutarate = 3-(imidazol-4-yl)-2-oxopropyl phosphate + L-glutamate. Its pathway is amino-acid biosynthesis; L-histidine biosynthesis; L-histidine from 5-phospho-alpha-D-ribose 1-diphosphate: step 7/9. The polypeptide is Histidinol-phosphate aminotransferase (Campylobacter jejuni subsp. doylei (strain ATCC BAA-1458 / RM4099 / 269.97)).